We begin with the raw amino-acid sequence, 154 residues long: Superoxide dismutase [Cu-Zn] (154 aa).

Cu cation-binding residues include His47, His49, and His64. Cys58 and Cys147 are disulfide-bonded. Zn(2+) contacts are provided by His64, His72, His81, and Asp84. His121 lines the Cu cation pocket. Residues 125 to 136 (DDLGKGGNEESL) show a composition bias toward basic and acidic residues. The segment at 125–144 (DDLGKGGNEESLKTGNAGPR) is disordered. A substrate-binding site is contributed by Arg144.

It belongs to the Cu-Zn superoxide dismutase family. As to quaternary structure, homodimer. The cofactor is Cu cation. Zn(2+) is required as a cofactor.

Its subcellular location is the cytoplasm. The catalysed reaction is 2 superoxide + 2 H(+) = H2O2 + O2. Destroys radicals which are normally produced within the cells and which are toxic to biological systems. The sequence is that of Superoxide dismutase [Cu-Zn] (SOD1) from Candida glabrata (strain ATCC 2001 / BCRC 20586 / JCM 3761 / NBRC 0622 / NRRL Y-65 / CBS 138) (Yeast).